The sequence spans 167 residues: Peptidyl-prolyl cis-trans isomerase-like 3 (167 aa).

In terms of domain architecture, PPIase cyclophilin-type spans 1-160 (MSVTLHTTLG…EEVRIERVTV (160 aa)).

The protein belongs to the cyclophilin-type PPIase family. PPIL3 subfamily.

It carries out the reaction [protein]-peptidylproline (omega=180) = [protein]-peptidylproline (omega=0). PPIases accelerate the folding of proteins. It catalyzes the cis-trans isomerization of proline imidic peptide bonds in oligopeptides. In Neurospora crassa (strain ATCC 24698 / 74-OR23-1A / CBS 708.71 / DSM 1257 / FGSC 987), this protein is Peptidyl-prolyl cis-trans isomerase-like 3 (cyp-10).